Here is a 226-residue protein sequence, read N- to C-terminus: UPF0758 protein Sca_1264 (226 aa).

The MPN domain occupies 102–224; it reads KITSPQDAAD…YLSMVEGGYF (123 aa). The Zn(2+) site is built by His173, His175, and Asp186. Residues 173–186 carry the JAMM motif motif; that stretch reads HNHPSGDVTPSKED.

Belongs to the UPF0758 family.

The protein is UPF0758 protein Sca_1264 of Staphylococcus carnosus (strain TM300).